A 335-amino-acid polypeptide reads, in one-letter code: Holliday junction branch migration complex subunit RuvB (335 aa).

A large ATPase domain (RuvB-L) region spans residues methionine 1–tyrosine 181. ATP-binding positions include leucine 20, arginine 21, glycine 62, lysine 65, threonine 66, threonine 67, glutamate 128–phenylalanine 130, arginine 171, tyrosine 181, and arginine 218. Residue threonine 66 coordinates Mg(2+). Residues serine 182–glutamine 252 form a small ATPAse domain (RuvB-S) region. A head domain (RuvB-H) region spans residues glutamate 255–phenylalanine 335. DNA is bound by residues arginine 310 and arginine 315.

It belongs to the RuvB family. In terms of assembly, homohexamer. Forms an RuvA(8)-RuvB(12)-Holliday junction (HJ) complex. HJ DNA is sandwiched between 2 RuvA tetramers; dsDNA enters through RuvA and exits via RuvB. An RuvB hexamer assembles on each DNA strand where it exits the tetramer. Each RuvB hexamer is contacted by two RuvA subunits (via domain III) on 2 adjacent RuvB subunits; this complex drives branch migration. In the full resolvosome a probable DNA-RuvA(4)-RuvB(12)-RuvC(2) complex forms which resolves the HJ.

The protein resides in the cytoplasm. It carries out the reaction ATP + H2O = ADP + phosphate + H(+). In terms of biological role, the RuvA-RuvB-RuvC complex processes Holliday junction (HJ) DNA during genetic recombination and DNA repair, while the RuvA-RuvB complex plays an important role in the rescue of blocked DNA replication forks via replication fork reversal (RFR). RuvA specifically binds to HJ cruciform DNA, conferring on it an open structure. The RuvB hexamer acts as an ATP-dependent pump, pulling dsDNA into and through the RuvAB complex. RuvB forms 2 homohexamers on either side of HJ DNA bound by 1 or 2 RuvA tetramers; 4 subunits per hexamer contact DNA at a time. Coordinated motions by a converter formed by DNA-disengaged RuvB subunits stimulates ATP hydrolysis and nucleotide exchange. Immobilization of the converter enables RuvB to convert the ATP-contained energy into a lever motion, pulling 2 nucleotides of DNA out of the RuvA tetramer per ATP hydrolyzed, thus driving DNA branch migration. The RuvB motors rotate together with the DNA substrate, which together with the progressing nucleotide cycle form the mechanistic basis for DNA recombination by continuous HJ branch migration. Branch migration allows RuvC to scan DNA until it finds its consensus sequence, where it cleaves and resolves cruciform DNA. In Methanoregula boonei (strain DSM 21154 / JCM 14090 / 6A8), this protein is Holliday junction branch migration complex subunit RuvB.